Reading from the N-terminus, the 583-residue chain is 2-succinyl-5-enolpyruvyl-6-hydroxy-3-cyclohexene-1-carboxylate synthase (583 aa).

The protein belongs to the TPP enzyme family. MenD subfamily. As to quaternary structure, homodimer. The cofactor is Mg(2+). Mn(2+) serves as cofactor. It depends on thiamine diphosphate as a cofactor.

It catalyses the reaction isochorismate + 2-oxoglutarate + H(+) = 5-enolpyruvoyl-6-hydroxy-2-succinyl-cyclohex-3-ene-1-carboxylate + CO2. It functions in the pathway quinol/quinone metabolism; 1,4-dihydroxy-2-naphthoate biosynthesis; 1,4-dihydroxy-2-naphthoate from chorismate: step 2/7. Its pathway is cofactor biosynthesis; phylloquinone biosynthesis. In terms of biological role, catalyzes the thiamine diphosphate-dependent decarboxylation of 2-oxoglutarate and the subsequent addition of the resulting succinic semialdehyde-thiamine pyrophosphate anion to isochorismate to yield 2-succinyl-5-enolpyruvyl-6-hydroxy-3-cyclohexene-1-carboxylate (SEPHCHC). The sequence is that of 2-succinyl-5-enolpyruvyl-6-hydroxy-3-cyclohexene-1-carboxylate synthase from Trichormus variabilis (strain ATCC 29413 / PCC 7937) (Anabaena variabilis).